We begin with the raw amino-acid sequence, 234 residues long: uncharacterized protein (234 aa).

Positions Val-24–Thr-83 constitute an HTH tetR-type domain. The segment at residues Ser-46–Phe-65 is a DNA-binding region (H-T-H motif).

This is an uncharacterized protein from Mycobacterium tuberculosis (strain CDC 1551 / Oshkosh).